A 322-amino-acid chain; its full sequence is Malate dehydrogenase (322 aa).

NAD(+) contacts are provided by residues 10-15 (GSGQIG) and Asp-34. The substrate site is built by Arg-83 and Arg-89. Residues Asn-96 and 119-121 (ITN) contribute to the NAD(+) site. Substrate-binding residues include Asn-121 and Arg-152. The active-site Proton acceptor is His-176.

Belongs to the LDH/MDH superfamily. MDH type 3 family.

The catalysed reaction is (S)-malate + NAD(+) = oxaloacetate + NADH + H(+). Functionally, catalyzes the reversible oxidation of malate to oxaloacetate. The chain is Malate dehydrogenase from Nitrobacter hamburgensis (strain DSM 10229 / NCIMB 13809 / X14).